A 55-amino-acid chain; its full sequence is Large ribosomal subunit protein uL30 (55 aa).

The protein belongs to the universal ribosomal protein uL30 family. As to quaternary structure, part of the 50S ribosomal subunit.

In terms of biological role, binds the 5S and 23S rRNAs. In Deinococcus radiodurans (strain ATCC 13939 / DSM 20539 / JCM 16871 / CCUG 27074 / LMG 4051 / NBRC 15346 / NCIMB 9279 / VKM B-1422 / R1), this protein is Large ribosomal subunit protein uL30.